The sequence spans 310 residues: Tagatose-6-phosphate kinase (310 aa).

It belongs to the carbohydrate kinase PfkB family. LacC subfamily.

It catalyses the reaction D-tagatofuranose 6-phosphate + ATP = D-tagatofuranose 1,6-bisphosphate + ADP + H(+). It participates in carbohydrate metabolism; D-tagatose 6-phosphate degradation; D-glyceraldehyde 3-phosphate and glycerone phosphate from D-tagatose 6-phosphate: step 1/2. In Lactococcus lactis subsp. lactis (Streptococcus lactis), this protein is Tagatose-6-phosphate kinase.